The primary structure comprises 461 residues: Methylenetetrahydrofolate--tRNA-(uracil-5-)-methyltransferase TrmFO (461 aa).

Position 16–21 (16–21 (GAGLAG)) interacts with FAD.

It belongs to the MnmG family. TrmFO subfamily. Requires FAD as cofactor.

It localises to the cytoplasm. The enzyme catalyses uridine(54) in tRNA + (6R)-5,10-methylene-5,6,7,8-tetrahydrofolate + NADH + H(+) = 5-methyluridine(54) in tRNA + (6S)-5,6,7,8-tetrahydrofolate + NAD(+). It carries out the reaction uridine(54) in tRNA + (6R)-5,10-methylene-5,6,7,8-tetrahydrofolate + NADPH + H(+) = 5-methyluridine(54) in tRNA + (6S)-5,6,7,8-tetrahydrofolate + NADP(+). Its function is as follows. Catalyzes the folate-dependent formation of 5-methyl-uridine at position 54 (M-5-U54) in all tRNAs. This chain is Methylenetetrahydrofolate--tRNA-(uracil-5-)-methyltransferase TrmFO, found in Parasynechococcus marenigrum (strain WH8102).